The chain runs to 1247 residues: Structural polyprotein (1247 aa).

The interval 36 to 67 (RPAGQLAQLISAVSRLALRTVPQKPRRTRKIK) is host transcription inhibition. The tract at residues 53 to 103 (LRTVPQKPRRTRKIKKQKQVKQEQQSTRNQKKKAPKQKQTQKKKRPGRRER) is disordered. Composition is skewed to basic residues over residues 59–71 (KPRRTRKIKKQKQ) and 81–100 (NQKKKAPKQKQTQKKKRPGR). The Nuclear localization signal signature appears at 60 to 98 (PRRTRKIKKQKQVKQEQQSTRNQKKKAPKQKQTQKKKRP). Residues 83–113 (KKKAPKQKQTQKKKRPGRRERMCMKIENDCI) form a binding to the viral RNA region. The ribosome-binding stretch occupies residues 98–112 (PGRRERMCMKIENDC). Cys112 and Cys127 form a disulfide bridge. In terms of domain architecture, Peptidase S3 spans 112–260 (CIFEVKHEGK…KITPEGSVEW (149 aa)). The active-site Charge relay system is His138. Residues 143–153 (IDNADLAKLAF) carry the Nuclear export signal motif. The segment at 154 to 159 (KRSSKY) is interaction with spike glycoprotein E2. Asp160 acts as the Charge relay system in catalysis. Residues 182 to 192 (PEGYYNWHHGA) are dimerization of the capsid protein. Ser212 serves as the catalytic Charge relay system. Residues 218 to 222 (DNKGR) form a dimerization of the capsid protein region. Residues 261–273 (SLALPVMCLLANT) are functions as an uncleaved signal peptide for the precursor of protein E3/E2. 9 cysteine pairs are disulfide-bonded: Cys268/Cys277, Cys282/Cys286, Cys285/Cys317, Cys343/Cys449, Cys346/Cys352, Cys415/Cys429, Cys477/Cys590, Cys525/Cys549, and Cys527/Cys544. Asn272 is a glycosylation site (N-linked (GlcNAc...) asparagine; by host). Over 325–691 (NARENFNVYK…YYYELYPTTT (367 aa)) the chain is Extracellular. N-linked (GlcNAc...) asparagine; by host glycosylation occurs at Asn587. A helical membrane pass occupies residues 692–712 (IAVLAAASIVVASLVGLSLGM). At 713–747 (CICARRRCITPYELTPGATIPFLLGILCCVKTAKA) the chain is on the cytoplasmic side. The interval 715–719 (CARRR) is interaction with the capsid protein. Residues Cys720, Cys740, and Cys741 are each lipidated (S-palmitoyl cysteine; by host). Positions 720-740 (CITPYELTPGATIPFLLGILC) are transient transmembrane before p62-6K protein processing. Cysteines 720 and 741 form a disulfide. At 748-762 (ASYYEAATYLWNEQQ) the chain is on the extracellular side. Residues 763 to 783 (PLFWLQLLIPLSAAIVVCNCL) traverse the membrane as a helical segment. At 784–787 (KLLP) the chain is on the cytoplasmic side. The chain crosses the membrane as a helical span at residues 788–808 (CCCKTLTFLAVMSIGARTVSA). Over 809–1223 (YEHATVIPNT…AMSWVQKITG (415 aa)) the chain is Extracellular. Intrachain disulfides connect Cys857–Cys922, Cys870–Cys902, Cys871–Cys904, and Cys876–Cys886. The interval 892–909 (VYPFMWGGAYCFCDAENT) is E1 fusion peptide loop. N-linked (GlcNAc...) asparagine; by host glycans are attached at residues Asn949 and Asn1078. Cystine bridges form between Cys1067–Cys1079, Cys1109–Cys1184, Cys1114–Cys1188, and Cys1136–Cys1178. The chain crosses the membrane as a helical span at residues 1224–1244 (GVGLVVAIAALILIIVLCVSF). Cys1241 is lipidated: S-palmitoyl cysteine; by host. The Cytoplasmic portion of the chain corresponds to 1245-1247 (SRH).

Homodimer. Homomultimer. Interacts with host karyopherin KPNA4; this interaction allows the nuclear import of the viral capsid protein. Interacts with spike glycoprotein E2. Interacts with host IRAK1; the interaction leads to inhibition of IRAK1-dependent signaling. In terms of assembly, the precursor of protein E3/E2 and E1 form a heterodimer shortly after synthesis. As to quaternary structure, the precursor of protein E3/E2 and E1 form a heterodimer shortly after synthesis. Processing of the precursor of protein E3/E2 into E2 and E3 results in a heterodimer of the spike glycoproteins E2 and E1. Spike at virion surface are constituted of three E2-E1 heterodimers. After target cell attachment and endocytosis, E1 change conformation to form homotrimers. Interacts with 6K protein. Interacts with spike glycoprotein E1. Processing of the precursor of protein E3/E2 into E2 and E3 results in a heterodimer of the spike glycoproteins E2 and E1. Spike at virion surface are constituted of a trimer of E2-E1 heterodimers. Interacts with 6K protein. Interacts with host MXRA8; this interaction mediates virus entry. In terms of assembly, oligomer. Interacts with spike glycoprotein E1. Interacts with spike glycoprotein E2. In terms of processing, structural polyprotein: Specific enzymatic cleavages in vivo yield mature proteins. Capsid protein is auto-cleaved during polyprotein translation, unmasking a signal peptide at the N-terminus of the precursor of E3/E2. The remaining polyprotein is then targeted to the host endoplasmic reticulum, where host signal peptidase cleaves it into pE2, 6K and E1 proteins. pE2 is further processed to mature E3 and E2 by host furin in trans-Golgi vesicle. Post-translationally, palmitoylated via thioester bonds. These palmitoylations may induce disruption of the C-terminus transmembrane. This would result in the reorientation of E2 C-terminus from lumenal to cytoplasmic side. N-glycosylated. In terms of processing, palmitoylated via thioester bonds.

It is found in the virion. The protein localises to the host cytoplasm. The protein resides in the host cell membrane. Its subcellular location is the host nucleus. It localises to the virion membrane. It is found in the host Golgi apparatus. The protein localises to the host trans-Golgi network. The protein resides in the host endoplasmic reticulum. The enzyme catalyses Autocatalytic release of the core protein from the N-terminus of the togavirus structural polyprotein by hydrolysis of a -Trp-|-Ser- bond.. In terms of biological role, forms an icosahedral capsid with a T=4 symmetry composed of 240 copies of the capsid protein surrounded by a lipid membrane through which penetrate 80 spikes composed of trimers of E1-E2 heterodimers. The capsid protein binds to the viral RNA genome at a site adjacent to a ribosome binding site for viral genome translation following genome release. Possesses a protease activity that results in its autocatalytic cleavage from the nascent structural protein. Following its self-cleavage, the capsid protein transiently associates with ribosomes, and within several minutes the protein binds to viral RNA and rapidly assembles into icosahedric core particles. The resulting nucleocapsid eventually associates with the cytoplasmic domain of the spike glycoprotein E2 at the cell membrane, leading to budding and formation of mature virions. In case of infection, new virions attach to target cells and after clathrin-mediated endocytosis their membrane fuses with the host endosomal membrane. This leads to the release of the nucleocapsid into the cytoplasm, followed by an uncoating event necessary for the genomic RNA to become accessible. The uncoating might be triggered by the interaction of capsid proteins with ribosomes. Binding of ribosomes would release the genomic RNA since the same region is genomic RNA-binding and ribosome-binding. Specifically inhibits interleukin-1 receptor-associated kinase 1/IRAK1-dependent signaling during viral entry, representing a means by which the alphaviruses may evade innate immune detection and activation prior to viral gene expression. Provides the signal sequence for the translocation of the precursor of protein E3/E2 to the host endoplasmic reticulum. Furin-cleaved E3 remains associated with spike glycoprotein E1 and mediates pH protection of the latter during the transport via the secretory pathway. After virion release from the host cell, the assembly protein E3 is gradually released in the extracellular space. Its function is as follows. Plays a role in viral attachment to target host cell, by binding to the cell receptor MXRA8. Synthesized as a p62 precursor which is processed by furin at the cell membrane just before virion budding, giving rise to E2-E1 heterodimer. The p62-E1 heterodimer is stable, whereas E2-E1 is unstable and dissociate at low pH. p62 is processed at the last step, presumably to avoid E1 fusion activation before its final export to cell surface. E2 C-terminus contains a transitory transmembrane that would be disrupted by palmitoylation, resulting in reorientation of the C-terminal tail from lumenal to cytoplasmic side. This step is critical since E2 C-terminus is involved in budding by interacting with capsid proteins. This release of E2 C-terminus in cytoplasm occurs lately in protein export, and precludes premature assembly of particles at the endoplasmic reticulum membrane. Functionally, acts as a viroporin that participates in virus glycoprotein processing and transport to the plasma membrane, cell permeabilization and budding of viral particles. Disrupts the calcium homeostasis of the cell, probably at the endoplasmic reticulum level. This leads to cytoplasmic calcium elevation. Because of its lipophilic properties, the 6K protein is postulated to influence the selection of lipids that interact with the transmembrane domains of the glycoproteins, which, in turn, affects the deformability of the bilayer required for the extreme curvature that occurs as budding proceeds. Present in low amount in virions, about 3% compared to viral glycoproteins. In terms of biological role, class II viral fusion protein. Fusion activity is inactive as long as E1 is bound to E2 in mature virion. After virus attachment to target cell via host MXRA8 and endocytosis, acidification of the endosome induce dissociation of E1/E2 heterodimer and concomitant trimerization of the E1 subunits. This E1 trimer is fusion active, and promotes release of viral nucleocapsid in cytoplasm after endosome and viral membrane fusion. Efficient fusion requires the presence of cholesterol and sphingolipid in the target membrane. This is Structural polyprotein from Anopheles (Human).